Here is a 590-residue protein sequence, read N- to C-terminus: MNIFTEFHARIAAILRGIIGSGRLPEDLDLTRFVVEPPREAAHGDLAANAAMVYAKEAKPAFANPRQLAVEIAVALAEDGDVAEAEVAGPGFINIRLKPEFFGRLLGAALEQGSDFGRPATAAQEKINVEYVSANPTGPMHVGHGRGAVFGDALANLLAFAGFGVTREYYINDAGAQVDVLARSAHLRYREALGETIGAIPEGLYPGDYLKSVGASLAQAHGDTYRGSNGEEWLEIFRLAAIDGMMAMIRDDLAALNITHEVFFSERSLTRSEDGDQVAAAIAFLRDRGLVYEGRLPPPKGQAIEDWEDREQVLFKSTDFGDDVDRPLKKSDGTYTYFASDIAYHKTKIDRGYSVLIDVWGADHGGYVKRMAAAVKALSEGRVTLDVKLCQLVKLMRGGEPVKMSKRAGDFVTLREVVDEVGVDAVRFMMLFRKNDAVLEFDLAKVIEQSKDNPVFYVQYAHARVKSVFRQAATLLPDLDCSLAALKTADFSLLGDEGEARLIKIIAQFPRVVEGAALAHEPHRIAFYLHDLASELHAHWTRGKDQPHLRFIYEERRDLTLARLALVHIMAEVLASGLSLLGVSAPSEMR.

The 'HIGH' region signature appears at 134–144; the sequence is ANPTGPMHVGH.

The protein belongs to the class-I aminoacyl-tRNA synthetase family. As to quaternary structure, monomer.

Its subcellular location is the cytoplasm. It carries out the reaction tRNA(Arg) + L-arginine + ATP = L-arginyl-tRNA(Arg) + AMP + diphosphate. This is Arginine--tRNA ligase from Beijerinckia indica subsp. indica (strain ATCC 9039 / DSM 1715 / NCIMB 8712).